A 274-amino-acid polypeptide reads, in one-letter code: D-aminopeptidase (274 aa).

Zn(2+)-binding residues include Asp8, Glu10, His60, and His104. His115 acts as the Nucleophile in catalysis. Glu133 provides a ligand contact to Zn(2+).

Belongs to the peptidase M55 family. As to quaternary structure, homodecamer. A 20 Angstroms wide channel runs through the complex, giving access to a central chamber holding the active sites. Zn(2+) is required as a cofactor.

Functionally, hydrolyzes N-terminal residues in D-amino acid containing peptides. Among the tested substrates, the highest activities are with D-Ala-D-Ala and D-Ala-Gly-Gly. The physiological role is not clear. The protein is D-aminopeptidase (dppA) of Bacillus subtilis (strain 168).